Here is a 326-residue protein sequence, read N- to C-terminus: Lipoyl synthase (326 aa).

Cys-68, Cys-73, Cys-79, Cys-94, Cys-98, Cys-101, and Ser-308 together coordinate [4Fe-4S] cluster. A Radical SAM core domain is found at 80–297; the sequence is FNHGTATFMI…KDVAMGLGFS (218 aa).

The protein belongs to the radical SAM superfamily. Lipoyl synthase family. [4Fe-4S] cluster serves as cofactor.

Its subcellular location is the cytoplasm. The catalysed reaction is [[Fe-S] cluster scaffold protein carrying a second [4Fe-4S](2+) cluster] + N(6)-octanoyl-L-lysyl-[protein] + 2 oxidized [2Fe-2S]-[ferredoxin] + 2 S-adenosyl-L-methionine + 4 H(+) = [[Fe-S] cluster scaffold protein] + N(6)-[(R)-dihydrolipoyl]-L-lysyl-[protein] + 4 Fe(3+) + 2 hydrogen sulfide + 2 5'-deoxyadenosine + 2 L-methionine + 2 reduced [2Fe-2S]-[ferredoxin]. Its pathway is protein modification; protein lipoylation via endogenous pathway; protein N(6)-(lipoyl)lysine from octanoyl-[acyl-carrier-protein]: step 2/2. Functionally, catalyzes the radical-mediated insertion of two sulfur atoms into the C-6 and C-8 positions of the octanoyl moiety bound to the lipoyl domains of lipoate-dependent enzymes, thereby converting the octanoylated domains into lipoylated derivatives. The protein is Lipoyl synthase of Aeromonas salmonicida (strain A449).